The sequence spans 227 residues: DNA repair protein RecO (227 aa).

It belongs to the RecO family.

In terms of biological role, involved in DNA repair and RecF pathway recombination. The sequence is that of DNA repair protein RecO from Pseudomonas syringae pv. syringae (strain B728a).